Here is a 352-residue protein sequence, read N- to C-terminus: MIGLKLVTVLFAVATITHAAELQRVPLYKLVHVFINTQYAGITKIGNQNFLTVFDSTSCNVVVASQECVGGACVCPNLQKYEKLKPKYISDGNVQVKFFDTGSAVGRGIEDSLTISNLTTSQQDIVLADELSQEVCILSADVVVGIAAPGCPNALKGKTVLENFVEENLIAPVFSIHHARFQDGEHFGEIIFGGSDWKYVDGEFTYVPLVGDDSWKFRLDGVKIGDTTVAPAGTQAIIDTSKAIIVGPKAYVNPINEAIGCVVEKTTTRRICKLDCSKIPSLPDVTFVINGRNFNISSQYYIQQNGNLCYSGFQPCGHSDHFFIGDFFVDHYYSEFNWENKTMGFGRSVESV.

Residues M1–A19 form the signal peptide. The propeptide at A20–R24 is removed in mature form. The Peptidase A1 domain maps to Y39–G346. Residue D55 is part of the active site. Cystine bridges form between C59–C151, C68–C73, and C75–C136. Residue N117 is glycosylated (N-linked (GlcNAc...) asparagine). Residues H178 and H186 each contribute to the Zn(2+) site. Residue D239 is part of the active site. 2 disulfide bridges follow: C261–C272 and C276–C309. N295 carries an N-linked (GlcNAc...) asparagine glycan. Residues D326 and D330 each coordinate Zn(2+). N340 is a glycosylation site (N-linked (GlcNAc...) asparagine).

Belongs to the peptidase A1 family. In terms of assembly, homodimer.

Functionally, functions as a digestive enzyme in the cockroach. The chain is Aspartic protease Bla g 2 from Blattella germanica (German cockroach).